The sequence spans 200 residues: ADP-ribosylation factor-like protein 4A (200 aa).

Residue Gly-2 is the site of N-myristoyl glycine attachment. Residues 27–34, 75–79, and 134–137 contribute to the GTP site; these read GLDCAGKT, DVGGQ, and NKQD.

Belongs to the small GTPase superfamily. Arf family. As to quaternary structure, interacts with CYTH2. Interacts with KPNA2; the interaction is direct. Does not interact with ARL4A. Myristoylated. Expressed strongly in testis and liver. Expressed slightly in heart, spleen, lung and kidney.

Its subcellular location is the cell membrane. It is found in the cytoplasm. The protein resides in the nucleus. The protein localises to the nucleolus. Small GTP-binding protein which cycles between an inactive GDP-bound and an active GTP-bound form, and the rate of cycling is regulated by guanine nucleotide exchange factors (GEF) and GTPase-activating proteins (GAP). GTP-binding protein that does not act as an allosteric activator of the cholera toxin catalytic subunit. Recruits CYTH1, CYTH2, CYTH3 and CYTH4 to the plasma membrane in GDP-bound form. The protein is ADP-ribosylation factor-like protein 4A (Arl4a) of Mus musculus (Mouse).